The chain runs to 97 residues: Gibberellin-regulated protein 5 (97 aa).

Residues 1 to 27 form the signal peptide; that stretch reads MANCIRRNALFFLTLLFLLSVSNLVQA.

This sequence belongs to the GASA family. Six disulfide bonds may be present. In terms of tissue distribution, expressed in roots, root hairs, vasculature of cotyledons and hypocotyls, shoot apex, leaf veins, stems, flower receptacles, pollen, filaments, anthers and siliques.

It localises to the secreted. The protein localises to the cell wall. Its subcellular location is the extracellular space. The protein resides in the extracellular matrix. Functionally, gibberellin-regulated protein that acts as a negative regulator of gibberellin-induced flowering and stem growth. May inhibit flowering and inflorescence growth via a pathway involving GAI and by enhancing FLC expression and repressing FT and LFY. Acts as a negative regulator in thermotolerance by resogulating both salicylic acid (SA) signaling and heat shock-protein accumulation. The chain is Gibberellin-regulated protein 5 (GASA5) from Arabidopsis thaliana (Mouse-ear cress).